The sequence spans 185 residues: Ribosome-recycling factor (185 aa).

The protein belongs to the RRF family.

The protein localises to the cytoplasm. Functionally, responsible for the release of ribosomes from messenger RNA at the termination of protein biosynthesis. May increase the efficiency of translation by recycling ribosomes from one round of translation to another. The protein is Ribosome-recycling factor of Bacillus pumilus (strain SAFR-032).